The chain runs to 68 residues: Tabimmunregulin 12 (68 aa).

The signal sequence occupies residues 1-24 (MLFKSYVYFLAGLLLVGLFTSCDA). A propeptide spanning residues 25–38 (DAQYEELVPGFFRK) is cleaved from the precursor.

As to expression, expressed in salivary glands.

The protein resides in the secreted. Its function is as follows. Horsefly salivary gland immunosuppressant protein that likely inhibits the host inflammatory response by regulation of anti- and pro-inflammatory cytokines. When tested on mouse splenocytes in the presence of LPS, it increases the secretion of the proinflammatory cytokine interleukin-10 (IL10) and decreases the secretion of the proinflammatory cytokine interferon-gamma (IFNG) in a dose-dependent manner. This chain is Tabimmunregulin 12, found in Tabanus yao (Horsefly).